The chain runs to 321 residues: Peroxidase 27 (321 aa).

An N-terminal signal peptide occupies residues 1–23 (MAASKRLVVSCLFLVLLFAQANS). 4 disulfide bridges follow: Cys35/Cys113, Cys68/Cys73, Cys119/Cys317, and Cys196/Cys228. His66 (proton acceptor) is an active-site residue. Ca(2+) contacts are provided by Asp67, Val70, Gly72, Asp74, and Ser76. Pro159 serves as a coordination point for substrate. Asn164 carries N-linked (GlcNAc...) asparagine glycosylation. Residue His189 coordinates heme b. Thr190 provides a ligand contact to Ca(2+). Residue Asn205 is glycosylated (N-linked (GlcNAc...) asparagine). Residues Asp240, Ser243, and Asp248 each contribute to the Ca(2+) site.

Belongs to the peroxidase family. Classical plant (class III) peroxidase subfamily. Requires heme b as cofactor. The cofactor is Ca(2+). Expressed in the whole plant, but preferentially in roots and flowers.

It is found in the secreted. The catalysed reaction is 2 a phenolic donor + H2O2 = 2 a phenolic radical donor + 2 H2O. Removal of H(2)O(2), oxidation of toxic reductants, biosynthesis and degradation of lignin, suberization, auxin catabolism, response to environmental stresses such as wounding, pathogen attack and oxidative stress. These functions might be dependent on each isozyme/isoform in each plant tissue. The protein is Peroxidase 27 (PER27) of Arabidopsis thaliana (Mouse-ear cress).